A 96-amino-acid polypeptide reads, in one-letter code: Aspartyl/glutamyl-tRNA(Asn/Gln) amidotransferase subunit C (96 aa).

It belongs to the GatC family. Heterotrimer of A, B and C subunits.

It carries out the reaction L-glutamyl-tRNA(Gln) + L-glutamine + ATP + H2O = L-glutaminyl-tRNA(Gln) + L-glutamate + ADP + phosphate + H(+). The catalysed reaction is L-aspartyl-tRNA(Asn) + L-glutamine + ATP + H2O = L-asparaginyl-tRNA(Asn) + L-glutamate + ADP + phosphate + 2 H(+). In terms of biological role, allows the formation of correctly charged Asn-tRNA(Asn) or Gln-tRNA(Gln) through the transamidation of misacylated Asp-tRNA(Asn) or Glu-tRNA(Gln) in organisms which lack either or both of asparaginyl-tRNA or glutaminyl-tRNA synthetases. The reaction takes place in the presence of glutamine and ATP through an activated phospho-Asp-tRNA(Asn) or phospho-Glu-tRNA(Gln). In Geobacillus kaustophilus (strain HTA426), this protein is Aspartyl/glutamyl-tRNA(Asn/Gln) amidotransferase subunit C.